The following is a 344-amino-acid chain: tRNA N6-adenosine threonylcarbamoyltransferase (344 aa).

Fe cation-binding residues include histidine 112 and histidine 116. Substrate contacts are provided by residues leucine 135–glycine 139, aspartate 168, glycine 181, and asparagine 271. Aspartate 299 contributes to the Fe cation binding site. The segment at arginine 323–alanine 344 is disordered.

This sequence belongs to the KAE1 / TsaD family. Requires Fe(2+) as cofactor.

It localises to the cytoplasm. The catalysed reaction is L-threonylcarbamoyladenylate + adenosine(37) in tRNA = N(6)-L-threonylcarbamoyladenosine(37) in tRNA + AMP + H(+). In terms of biological role, required for the formation of a threonylcarbamoyl group on adenosine at position 37 (t(6)A37) in tRNAs that read codons beginning with adenine. Is involved in the transfer of the threonylcarbamoyl moiety of threonylcarbamoyl-AMP (TC-AMP) to the N6 group of A37, together with TsaE and TsaB. TsaD likely plays a direct catalytic role in this reaction. This Erythrobacter litoralis (strain HTCC2594) protein is tRNA N6-adenosine threonylcarbamoyltransferase.